Consider the following 654-residue polypeptide: tRNA uridine 5-carboxymethylaminomethyl modification enzyme MnmG (654 aa).

17 to 22 (GGGHAG) contacts FAD. 289–303 (GPRYCPSIEDKIVKF) lines the NAD(+) pocket.

It belongs to the MnmG family. As to quaternary structure, homodimer. Heterotetramer of two MnmE and two MnmG subunits. FAD serves as cofactor.

It localises to the cytoplasm. Its function is as follows. NAD-binding protein involved in the addition of a carboxymethylaminomethyl (cmnm) group at the wobble position (U34) of certain tRNAs, forming tRNA-cmnm(5)s(2)U34. This Prochlorococcus marinus subsp. pastoris (strain CCMP1986 / NIES-2087 / MED4) protein is tRNA uridine 5-carboxymethylaminomethyl modification enzyme MnmG.